A 314-amino-acid chain; its full sequence is 4-hydroxy-3-methylbut-2-enyl diphosphate reductase (314 aa).

[4Fe-4S] cluster is bound at residue Cys12. (2E)-4-hydroxy-3-methylbut-2-enyl diphosphate contacts are provided by His43 and His81. Residues His43 and His81 each coordinate dimethylallyl diphosphate. Residues His43 and His81 each contribute to the isopentenyl diphosphate site. Residue Cys103 participates in [4Fe-4S] cluster binding. (2E)-4-hydroxy-3-methylbut-2-enyl diphosphate is bound at residue His131. His131 contributes to the dimethylallyl diphosphate binding site. His131 lines the isopentenyl diphosphate pocket. Glu133 (proton donor) is an active-site residue. Thr170 is a (2E)-4-hydroxy-3-methylbut-2-enyl diphosphate binding site. [4Fe-4S] cluster is bound at residue Cys198. (2E)-4-hydroxy-3-methylbut-2-enyl diphosphate contacts are provided by Ser226, Asn228, and Ser271. Dimethylallyl diphosphate contacts are provided by Ser226, Asn228, and Ser271. Isopentenyl diphosphate is bound by residues Ser226, Asn228, and Ser271.

Belongs to the IspH family. [4Fe-4S] cluster serves as cofactor.

The catalysed reaction is isopentenyl diphosphate + 2 oxidized [2Fe-2S]-[ferredoxin] + H2O = (2E)-4-hydroxy-3-methylbut-2-enyl diphosphate + 2 reduced [2Fe-2S]-[ferredoxin] + 2 H(+). It catalyses the reaction dimethylallyl diphosphate + 2 oxidized [2Fe-2S]-[ferredoxin] + H2O = (2E)-4-hydroxy-3-methylbut-2-enyl diphosphate + 2 reduced [2Fe-2S]-[ferredoxin] + 2 H(+). Its pathway is isoprenoid biosynthesis; dimethylallyl diphosphate biosynthesis; dimethylallyl diphosphate from (2E)-4-hydroxy-3-methylbutenyl diphosphate: step 1/1. It participates in isoprenoid biosynthesis; isopentenyl diphosphate biosynthesis via DXP pathway; isopentenyl diphosphate from 1-deoxy-D-xylulose 5-phosphate: step 6/6. Catalyzes the conversion of 1-hydroxy-2-methyl-2-(E)-butenyl 4-diphosphate (HMBPP) into a mixture of isopentenyl diphosphate (IPP) and dimethylallyl diphosphate (DMAPP). Acts in the terminal step of the DOXP/MEP pathway for isoprenoid precursor biosynthesis. The sequence is that of 4-hydroxy-3-methylbut-2-enyl diphosphate reductase from Bacillus velezensis (strain DSM 23117 / BGSC 10A6 / LMG 26770 / FZB42) (Bacillus amyloliquefaciens subsp. plantarum).